The chain runs to 1438 residues: DNA polymerase III PolC-type (1438 aa).

The Exonuclease domain maps to 422-578 (YVVFDVETTG…YDTEATAYIF (157 aa)).

The protein belongs to the DNA polymerase type-C family. PolC subfamily.

The protein resides in the cytoplasm. It carries out the reaction DNA(n) + a 2'-deoxyribonucleoside 5'-triphosphate = DNA(n+1) + diphosphate. Required for replicative DNA synthesis. This DNA polymerase also exhibits 3' to 5' exonuclease activity. The sequence is that of DNA polymerase III PolC-type from Staphylococcus aureus (strain MSSA476).